The following is an 878-amino-acid chain: Multiple C2 and transmembrane domain-containing protein 2 (878 aa).

Disordered regions lie at residues 20 to 40 (LINL…DLRV) and 143 to 178 (KPSL…ESTL). Residues 149–161 (DAPEEHDKTHGND) are compositionally biased toward basic and acidic residues. C2 domains are found at residues 177–292 (TLGE…EHIL), 334–452 (SKSS…CLEL), and 486–607 (PSER…CYVL). Ca(2+) is bound by residues Asp-210, Asp-216, Asp-263, Asp-265, and Asp-270. Ca(2+) contacts are provided by Asp-525, Asp-531, Asp-577, Asp-579, and Asp-585. A helical membrane pass occupies residues 694-714 (FVVFLVTVWNFELYMIPLALL). The tract at residues 728–752 (KASSTQDSQESTDVEEEGKEEEKES) is disordered. Residues 737-746 (ESTDVEEEGK) show a composition bias toward acidic residues. The chain crosses the membrane as a helical span at residues 794 to 814 (PFLSLLACLILAITTVILYFI).

This sequence belongs to the MCTP family. The cofactor is Ca(2+).

It localises to the membrane. Its function is as follows. Might play a role in the development of cardiac outflow tract. The protein is Multiple C2 and transmembrane domain-containing protein 2 (Mctp2) of Mus musculus (Mouse).